The sequence spans 329 residues: G-protein coupled bile acid receptor 1 (329 aa).

The Extracellular segment spans residues 1–19 (MTSNSTREVPSPVPAGALG). N-linked (GlcNAc...) asparagine glycosylation occurs at Asn-4. The chain crosses the membrane as a helical span at residues 20–40 (LSLALASLIVAANLLLAVGIA). Residues 41 to 52 (GDRRLRSPPAGC) lie on the Cytoplasmic side of the membrane. A helical transmembrane segment spans residues 53–73 (FFLSLLLAGLLTGLALPALPV). Residues 74 to 85 (LWSQSRRGYWSC) lie on the Extracellular side of the membrane. Cysteines 85 and 155 form a disulfide. A helical membrane pass occupies residues 86–106 (LFLYLAPNFCFLSLLANLLLV). Over 107 to 125 (HGERYMAVLRPLRPRGSMR) the chain is Cytoplasmic. Residues 126–146 (LALLLTWAAPLLFASLPALGW) form a helical membrane-spanning segment. The Extracellular portion of the chain corresponds to 147–165 (NHWAPGGNCSSQAVFPAPY). An N-linked (GlcNAc...) asparagine glycan is attached at Asn-154. A helical membrane pass occupies residues 166 to 186 (LYLEIYGLLLPAVGAAALLSV). The Cytoplasmic portion of the chain corresponds to 187 to 230 (RVLVTAHRQLQDIRRLERAVCRGAPSALARALTWRQARAQAGAT). Residues 231 to 251 (LLFGLCWGPYVATLLLSVLAF) traverse the membrane as a helical segment. The Extracellular segment spans residues 252–261 (EQRPPLGPGT). The helical transmembrane segment at 262–282 (LLSLISLGSASAAAVPVAMGL) threads the bilayer. Residues 283-329 (GDQRYTGPWRVAAQKWLRMLRGRPQSSPGPSTAYHTSSQSSVDLDLN) lie on the Cytoplasmic side of the membrane. The interval 304 to 329 (GRPQSSPGPSTAYHTSSQSSVDLDLN) is disordered. The span at 306–329 (PQSSPGPSTAYHTSSQSSVDLDLN) shows a compositional bias: polar residues.

This sequence belongs to the G-protein coupled receptor 1 family.

Its subcellular location is the cell membrane. Receptor for bile acid. Bile acid-binding induces its internalization, activation of extracellular signal-regulated kinase and intracellular cAMP production. May be involved in the suppression of macrophage functions by bile acids. Involved in bile acid promoted GLP1R secretion. This is G-protein coupled bile acid receptor 1 (GPBAR1) from Bos taurus (Bovine).